The following is a 161-amino-acid chain: Anthrone oxygenase tpcL (161 aa).

Residue Asn4 is glycosylated (N-linked (GlcNAc...) asparagine). 4 consecutive transmembrane segments (helical) span residues 15-35 (VITGSFLSGLMMGLSVVDIPV), 56-74 (IGHKMMPSLAVTTCLLYGY), 87-107 (LPHIIAAVTTISMVPFTWLVM), and 136-155 (WAQLHAVRSLFPLMGSVLGL).

This sequence belongs to the anthrone oxygenase family. As to expression, specifically expressed in conidia.

The protein resides in the membrane. The enzyme catalyses emodin anthrone + O2 = emodin + H2O + H(+). The protein operates within secondary metabolite biosynthesis. Functionally, anthrone oxygenase; part of the gene cluster that mediates the biosynthesis of trypacidin, a mycotoxin with antiprotozoal activity and that plays a role in the infection process. The pathway begins with the synthesis of atrochrysone thioester by the polyketide synthase (PKS) tpcC. The atrochrysone carboxyl ACP thioesterase tpcB then breaks the thioester bond and releases the atrochrysone carboxylic acid from tpcC. The decarboxylase tpcK converts atrochrysone carboxylic acid to atrochrysone which is further reduced into emodin anthrone. The next step is performed by the emodin anthrone oxygenase tpcL that catalyzes the oxidation of emodinanthrone to emodin. Emodin O-methyltransferase encoded by tpcA catalyzes methylation of the 8-hydroxy group of emodin to form questin. Ring cleavage of questin by questin oxidase tpcI leads to desmethylsulochrin via several intermediates including questin epoxide. Another methylation step catalyzed by tpcM leads to the formation of sulochrin which is further converted to monomethylsulfochrin by tpcH. Finally, the tpcJ catalyzes the conversion of monomethylsulfochrin to trypacidin. Trypacidin is toxic for human pulmonary and bronchial epithelial cells by initiating the intracellular formation of nitric oxide (NO) and hydrogen peroxide (H(2)O(2)), thus triggering host necrotic cell death. The trypacidin pathway is also able to produce endocrocin via a distinct route from the endocrocin Enc pathway. The protein is Anthrone oxygenase tpcL of Aspergillus fumigatus (strain ATCC MYA-4609 / CBS 101355 / FGSC A1100 / Af293) (Neosartorya fumigata).